We begin with the raw amino-acid sequence, 236 residues long: Ubiquinone biosynthesis O-methyltransferase (236 aa).

S-adenosyl-L-methionine is bound by residues R40, G59, D80, and L124.

The protein belongs to the methyltransferase superfamily. UbiG/COQ3 family.

The enzyme catalyses a 3-demethylubiquinol + S-adenosyl-L-methionine = a ubiquinol + S-adenosyl-L-homocysteine + H(+). It carries out the reaction a 3-(all-trans-polyprenyl)benzene-1,2-diol + S-adenosyl-L-methionine = a 2-methoxy-6-(all-trans-polyprenyl)phenol + S-adenosyl-L-homocysteine + H(+). The protein operates within cofactor biosynthesis; ubiquinone biosynthesis. Its function is as follows. O-methyltransferase that catalyzes the 2 O-methylation steps in the ubiquinone biosynthetic pathway. The sequence is that of Ubiquinone biosynthesis O-methyltransferase from Saccharophagus degradans (strain 2-40 / ATCC 43961 / DSM 17024).